The primary structure comprises 996 residues: Disease resistance protein RGA4 (996 aa).

Positions 1–176 (MEAALLSGFI…PRIHEADLVG (176 aa)) are structured coiled coil (CC) domain. Positions 111-138 (NLQLAQQLQRLKRMAAEANQRKQRYTAA) form a coiled coil. One can recognise an NB-ARC domain in the interval 180 to 462 (DREELLEQLA…RWLAEGFVEP (283 aa)). LRR repeat units follow at residues 481–503 (RNII…TYGM), 504–528 (MREF…KFVP), 529–549 (KYVR…NFNG), 577–599 (LRVL…ICNL), 600–621 (VLLK…IAKL), 622–644 (KDLE…VFGL), 698–722 (MNKL…DLRE), 759–781 (PCYL…VTSL), 782–804 (RGLK…ALSN), 805–830 (LSYL…GFPR), and 851–874 (LPFL…QIEC).

This sequence belongs to the disease resistance NB-LRR family. As to quaternary structure, forms homodimer or heterodimer with RGA5 through its coiled coil (CC) domain. Expressed in leaves.

The protein resides in the cytoplasm. In terms of biological role, disease resistance (R) protein. Resistance proteins guard the plant against pathogens that contain an appropriate avirulence protein via an indirect interaction with this avirulence protein. That triggers a defense system including the hypersensitive response, which restricts the pathogen growth. Contribution of RGA5 is required to recognize the effector avirulence proteins AVR-Pia and AVR1-CO39 from M.oryzae. Acts as a constitutively active cell death inducer that is repressed by RGA5. Immune response triggered by the RGA4-RGA5 -mediated recognition of AVR1-CO39 confers resistance to X.oryzae pathovars. The protein is Disease resistance protein RGA4 of Oryza sativa subsp. japonica (Rice).